The sequence spans 115 residues: Large ribosomal subunit protein bL20 (115 aa).

It belongs to the bacterial ribosomal protein bL20 family.

In terms of biological role, binds directly to 23S ribosomal RNA and is necessary for the in vitro assembly process of the 50S ribosomal subunit. It is not involved in the protein synthesizing functions of that subunit. This Prochlorococcus marinus (strain MIT 9303) protein is Large ribosomal subunit protein bL20.